A 210-amino-acid polypeptide reads, in one-letter code: Secreted effector protein SteA (210 aa).

The protein resides in the secreted. It is found in the host cytoplasm. Functionally, effector proteins function to alter host cell physiology and promote bacterial survival in host tissues. Could be required for passage of bacteria from the peritoneal cavity into the spleen, for survival and replication within host cells, or for avoiding host immune response. The protein is Secreted effector protein SteA (steA) of Salmonella typhimurium (strain 14028s / SGSC 2262).